We begin with the raw amino-acid sequence, 811 residues long: MHSTGEPQRGPAGPYHHPMPYHVDQIPTTSHPSWHQAPHPGLPTPPYHPQQHPNYISMQPPPSQQQQMTPQALSTQQQQQVQQQQQRQLYSSPSPSRGPAAPAQNQKFRTEQWINNQAWPYSQSPAPPVAPSVMSYHQGDDRMSMLSVNTTMTNQFPDSQRCYSSNGSTCENVNPEMMQMNITQAAEQAIRLWFNTPDPMQRLHMAKTIRTWIRQDKFAQVDQANMPNCVQQILNIIYDGLKPQPVQLPISYYAQLWYNLLDILRRFTFLPIISPYIHQVVQMFCPRENGPQDFRELICNLISLNWQKDPHMKHCANQVFQIFNCIIMGVKNEKLRTEFAQHLKFEKLVGTLSEYFNPQVHPGMINPAIFIIFRFIISKDTRLKDYFIWNNNPHDQPPPPTGLIIKLNAVMIGSYRLIAGQNPETLPQNPELAHLIQVIIRTFDLLGLLLHDSDAIDGFVRSDGVGAITTVVQYPNNDLIRAGCKLLLQVSDAKALAKTPLENILPFLLRLIEIHPDDEVIYSGTGFLSNVVAHKQHVKDIAIRSNAIFLLHTIISKYPRLDELTDAPKRNRVCEIICNCLRTLNNFLMMWIPTPNGETKTAGPNEKQQVCKFIEIDILKKLMSCLSCEGMDTPGLLELRSTILRSFILLLRTPFVPKDGVLNVIDENRKENLIGHICAAYSWVFRQPNNTRTQSTKQQLVERTISLLLVLMEQCGAEKEVAQYSYSIDCPLNLLNGNQVKPTFIHNVLVVCDKILEHCPTRADIWTIDRPMLEGLTNHRNSDIAKAANSLLSRFPENDLLAGIFSNREYF.

Positions 1–105 (MHSTGEPQRG…SRGPAAPAQN (105 aa)) are disordered. The segment covering 64 to 103 (QQQQMTPQALSTQQQQQVQQQQQRQLYSSPSPSRGPAAPA) has biased composition (low complexity).

Interacts with TCF transcription factor pop-1 (via N-terminal region); interaction is direct.

It localises to the nucleus. Its subcellular location is the cytoplasm. It is found in the cytoplasmic granule. The protein localises to the cytoskeleton. The protein resides in the microtubule organizing center. It localises to the centrosome. Its subcellular location is the chromosome. It is found in the centromere. The protein localises to the kinetochore. Transcription coregulator. Part of the Wnt signaling asymmetry pathway, probably acting downstream of putative frizzled ligand mom-2, Wnt/frizzled receptors lin-17 and mom-5, and dishevelled homolog dsh-2. Activates or represses target gene expression, depending on upstream Wnt signals and interactions with transcription factors, such as pop-1. Required for the activation of Wnt-responsive genes in the E blastomere; thereby leading to a role in endoderm specification and gut development. Reciprocal distribution patterns of sys-1 and pop-1/TCF in the daughters of anterior-posterior cell divisions functions in specifying cell fate; a higher sys-1 to pop-1 ratio promotes the posterior cell fate, whereas a low sys-1 to pop-1 ratio promotes the anterior fate. Represses expression of homeobox ttx-3 in neuroblasts of the SIAD/SIBV lineage, perhaps acting by blocking its transcriptional activation by a complex consisting of ref-2 and pop-1. Required for early organization of the hermaphrodite, but not the male, gonad; involved in generation of regulatory cells, known as the distal tip cells (DTC), and in formation of the somatic gonadal primordium. Involved in regulating asymmetric divisions of the somatic gonadal precursor cells (SGP), Z1 and Z4. The chain is Beta-catenin homolog sys-1 from Caenorhabditis elegans.